Reading from the N-terminus, the 496-residue chain is Probable cytosol aminopeptidase (496 aa).

Lysine 266 and aspartate 271 together coordinate Mn(2+). Lysine 278 is an active-site residue. Mn(2+)-binding residues include aspartate 289, aspartate 348, and glutamate 350. Arginine 352 is a catalytic residue.

It belongs to the peptidase M17 family. Requires Mn(2+) as cofactor.

The protein localises to the cytoplasm. The enzyme catalyses Release of an N-terminal amino acid, Xaa-|-Yaa-, in which Xaa is preferably Leu, but may be other amino acids including Pro although not Arg or Lys, and Yaa may be Pro. Amino acid amides and methyl esters are also readily hydrolyzed, but rates on arylamides are exceedingly low.. The catalysed reaction is Release of an N-terminal amino acid, preferentially leucine, but not glutamic or aspartic acids.. In terms of biological role, presumably involved in the processing and regular turnover of intracellular proteins. Catalyzes the removal of unsubstituted N-terminal amino acids from various peptides. This chain is Probable cytosol aminopeptidase, found in Stutzerimonas stutzeri (strain A1501) (Pseudomonas stutzeri).